The chain runs to 202 residues: Outer-membrane lipoprotein carrier protein (202 aa).

Residues 1–18 (MNRLFLILLLIFSHEVFS) form the signal peptide.

This sequence belongs to the LolA family. In terms of assembly, monomer.

The protein resides in the periplasm. Participates in the translocation of lipoproteins from the inner membrane to the outer membrane. Only forms a complex with a lipoprotein if the residue after the N-terminal Cys is not an aspartate (The Asp acts as a targeting signal to indicate that the lipoprotein should stay in the inner membrane). The polypeptide is Outer-membrane lipoprotein carrier protein (Legionella pneumophila (strain Lens)).